A 560-amino-acid chain; its full sequence is Trans-activating transcriptional regulatory protein (560 aa).

A disordered region spans residues 106-133; the sequence is DSMKRKASELDSDSDSGESSKGKKRVIK.

The protein belongs to the nucleopolyhedrovirus IE-1 protein family.

Functionally, regulatory transcriptional protein, which trans-activates gene expression from early baculovirus promoters. Can also trans-activate its own promoter, suggesting that it is autoregulated during normal infection of insect cells. The protein is Trans-activating transcriptional regulatory protein (IE1) of Choristoneura fumiferana nuclear polyhedrosis virus (CfMNPV).